We begin with the raw amino-acid sequence, 293 residues long: Nucleotide-binding protein Dole_0503 (293 aa).

ATP is bound at residue 11–18 (GLSGSGKS). 62 to 65 (DLRE) provides a ligand contact to GTP.

The protein belongs to the RapZ-like family.

Displays ATPase and GTPase activities. In Desulfosudis oleivorans (strain DSM 6200 / JCM 39069 / Hxd3) (Desulfococcus oleovorans), this protein is Nucleotide-binding protein Dole_0503.